The chain runs to 367 residues: Regulator of fusion ref-1 (367 aa).

The segment covering 1–10 (MVLISTPPPA) has biased composition (pro residues). A disordered region spans residues 1-24 (MVLISTPPPAYAHNRKTSQEKKRR). Positions 11-24 (YAHNRKTSQEKKRR) are basic motif 1. In terms of domain architecture, bHLH 1 spans 11–63 (YAHNRKTSQEKKRRDEINAKIKELQLLIQNESDNEKMTQGDVLNRAVEVVSRM). Residues 25 to 63 (DEINAKIKELQLLIQNESDNEKMTQGDVLNRAVEVVSRM) are helix-loop-helix motif 1. Disordered stretches follow at residues 133 to 177 (RSES…RRDR) and 313 to 367 (ATSP…RPWE). The segment covering 141-157 (SSMSYRSQSSSPSTSES) has biased composition (low complexity). Positions 161-177 (IDRKEVKKNREQDRRDR) are enriched in basic and acidic residues. The tract at residues 162-175 (DRKEVKKNREQDRR) is basic motif 2. The region spanning 162–219 (DRKEVKKNREQDRRDRQGEAFDALKNFIIENKLMTSHQVEKMQRLNTLDIIIAYIQNK) is the bHLH 2 domain. The helix-loop-helix motif 2 stretch occupies residues 176-219 (DRQGEAFDALKNFIIENKLMTSHQVEKMQRLNTLDIIIAYIQNK). Low complexity predominate over residues 313–354 (ATSPKSQQSPSYSLDSPPPSSDTSSSSIETPSTPNENSNSNP). Residues 356 to 367 (ASRKSKLFRPWE) show a composition bias toward basic residues.

As to quaternary structure, interacts with unc-37.

The protein localises to the nucleus. Functionally, probable transcription factor. Binds 5'-TGCCACGTGTCCA-3' in vitro, probably via the E-box motif 5'-CA[TC][AG]TG-3'. Acts in embryonic development in a Notch-dependent manner, perhaps as a direct target of transcriptional regulator lag-1 in the Notch signaling pathway. Also acts in embryonic development in a Notch-independent manner. Plays a role in both Notch-dependent and -independent pathways in the execution of neuronal lineage decisions in the embryo. Also involved in regulating cell fate leading to formation of neuronal structures known as postdeirids. Involved in the pattern of cell fusion with a large syncytium known as hyp-7, during larval development, in hermaphrodites. Plays a role in regulating the activity of homeobox protein mab-5 in Pn.p cells. In Caenorhabditis elegans, this protein is Regulator of fusion ref-1.